Reading from the N-terminus, the 231-residue chain is dTTP/UTP pyrophosphatase (231 aa).

The Proton acceptor role is filled by D81.

The protein belongs to the Maf family. YhdE subfamily. A divalent metal cation is required as a cofactor.

It is found in the cytoplasm. It carries out the reaction dTTP + H2O = dTMP + diphosphate + H(+). It catalyses the reaction UTP + H2O = UMP + diphosphate + H(+). Functionally, nucleoside triphosphate pyrophosphatase that hydrolyzes dTTP and UTP. May have a dual role in cell division arrest and in preventing the incorporation of modified nucleotides into cellular nucleic acids. The protein is dTTP/UTP pyrophosphatase of Lawsonia intracellularis (strain PHE/MN1-00).